A 21-amino-acid polypeptide reads, in one-letter code: Fibrinogen beta chain (21 aa).

Glutamine 1 is modified (pyrrolidone carboxylic acid). Positions 1–11 (QPSYDYDEEED) are enriched in acidic residues. The tract at residues 1–21 (QPSYDYDEEEDDRAKLRLDAR) is disordered. Tyrosine 6 is modified (sulfotyrosine). Over residues 12 to 21 (DRAKLRLDAR) the composition is skewed to basic and acidic residues.

As to quaternary structure, heterohexamer; disulfide linked. Contains 2 sets of 3 non-identical chains (alpha, beta and gamma). The 2 heterotrimers are in head to head conformation with the N-termini in a small central domain. Post-translationally, conversion of fibrinogen to fibrin is triggered by thrombin, which cleaves fibrinopeptides A and B from alpha and beta chains, and thus exposes the N-terminal polymerization sites responsible for the formation of the soft clot.

It localises to the secreted. Cleaved by the protease thrombin to yield monomers which, together with fibrinogen alpha (FGA) and fibrinogen gamma (FGG), polymerize to form an insoluble fibrin matrix. Fibrin has a major function in hemostasis as one of the primary components of blood clots. In addition, functions during the early stages of wound repair to stabilize the lesion and guide cell migration during re-epithelialization. Was originally thought to be essential for platelet aggregation, based on in vitro studies using anticoagulated blood. However subsequent studies have shown that it is not absolutely required for thrombus formation in vivo. Enhances expression of SELP in activated platelets. Maternal fibrinogen is essential for successful pregnancy. Fibrin deposition is also associated with infection, where it protects against IFNG-mediated hemorrhage. May also facilitate the antibacterial immune response via both innate and T-cell mediated pathways. The protein is Fibrinogen beta chain (FGB) of Antilocapra americana (Pronghorn).